The primary structure comprises 338 residues: 1-aminocyclopropane-1-carboxylate deaminase (338 aa).

Position 51 is an N6-(pyridoxal phosphate)lysine (Lys51). Ser78 (nucleophile) is an active-site residue.

The protein belongs to the ACC deaminase/D-cysteine desulfhydrase family. In terms of assembly, homotrimer. Pyridoxal 5'-phosphate serves as cofactor.

It carries out the reaction 1-aminocyclopropane-1-carboxylate + H2O = 2-oxobutanoate + NH4(+). Functionally, catalyzes a cyclopropane ring-opening reaction, the irreversible conversion of 1-aminocyclopropane-1-carboxylate (ACC) to ammonia and alpha-ketobutyrate. Allows growth on ACC as a nitrogen source. This chain is 1-aminocyclopropane-1-carboxylate deaminase, found in Variovorax paradoxus (strain S110).